Reading from the N-terminus, the 490-residue chain is Argininosuccinate lyase (490 aa).

This sequence belongs to the lyase 1 family. Argininosuccinate lyase subfamily.

Its subcellular location is the cytoplasm. It carries out the reaction 2-(N(omega)-L-arginino)succinate = fumarate + L-arginine. The protein operates within amino-acid biosynthesis; L-arginine biosynthesis; L-arginine from L-ornithine and carbamoyl phosphate: step 3/3. The sequence is that of Argininosuccinate lyase from Bifidobacterium longum subsp. infantis (strain ATCC 15697 / DSM 20088 / JCM 1222 / NCTC 11817 / S12).